The following is a 220-amino-acid chain: Aspartic protease inhibitor 2 (220 aa).

An N-terminal signal peptide occupies residues 1 to 23 (MMKCLFLLCLCLLPIVVFSSTFT). Residues 24-32 (SQNLIDLPS) constitute a propeptide that is removed on maturation. Residues 26 to 31 (NLIDLP) carry the Vacuolar targeting signal motif. Residue Asn51 is glycosylated (N-linked (GlcNAc...) asparagine). Intrachain disulfides connect Cys80–Cys125 and Cys174–Cys185.

Belongs to the protease inhibitor I3 (leguminous Kunitz-type inhibitor) family. As to expression, tubers.

It is found in the vacuole. Inhibitor of cathepsin D (aspartic protease). May also inhibit trypsin and chymotrypsin (serine proteases). Protects the plant by inhibiting proteases of invading organisms. The protein is Aspartic protease inhibitor 2 of Solanum tuberosum (Potato).